The chain runs to 271 residues: MTYLQETSRSAVTVPKLMAMREAGEKIAMLTCYDASFAALLDRAGVDSLLIGDSLGNVLQGQSTTLPVTLDEIAYHTACVARAKPSALIVSDMPFGTYGTPADAYANAVKLMQSGAQMIKLEGGEWLADTVRFLVERSVPVCAHVGLTPQSVHAFGGFKVQGKTESGAAQLLRDSRAMQDAGAQLLVMEAMPTQLAAEVTKQLRIPTIGIGAGVDCSGQVLVLHDMLGIFPGKRPRFVKDFMQGQPSILAAVEAYVRAVKDGTFPGPEHTF.

Mg(2+)-binding residues include aspartate 53 and aspartate 92. 3-methyl-2-oxobutanoate-binding positions include 53 to 54, aspartate 92, and lysine 120; that span reads DS. Glutamate 122 lines the Mg(2+) pocket. Glutamate 189 (proton acceptor) is an active-site residue.

It belongs to the PanB family. As to quaternary structure, homodecamer; pentamer of dimers. The cofactor is Mg(2+).

It localises to the cytoplasm. It carries out the reaction 3-methyl-2-oxobutanoate + (6R)-5,10-methylene-5,6,7,8-tetrahydrofolate + H2O = 2-dehydropantoate + (6S)-5,6,7,8-tetrahydrofolate. Its pathway is cofactor biosynthesis; (R)-pantothenate biosynthesis; (R)-pantoate from 3-methyl-2-oxobutanoate: step 1/2. Its function is as follows. Catalyzes the reversible reaction in which hydroxymethyl group from 5,10-methylenetetrahydrofolate is transferred onto alpha-ketoisovalerate to form ketopantoate. This Paraburkholderia phymatum (strain DSM 17167 / CIP 108236 / LMG 21445 / STM815) (Burkholderia phymatum) protein is 3-methyl-2-oxobutanoate hydroxymethyltransferase.